Here is an 81-residue protein sequence, read N- to C-terminus: Sulfur carrier protein TusA (81 aa).

Residue cysteine 19 is the Cysteine persulfide intermediate of the active site.

Belongs to the sulfur carrier protein TusA family. In terms of assembly, interacts with IscS.

Its subcellular location is the cytoplasm. It functions in the pathway tRNA modification. Sulfur carrier protein involved in sulfur trafficking in the cell. Part of a sulfur-relay system required for 2-thiolation during synthesis of 2-thiouridine of the modified wobble base 5-methylaminomethyl-2-thiouridine (mnm(5)s(2)U) in tRNA. Interacts with IscS and stimulates its cysteine desulfurase activity. Accepts an activated sulfur from IscS, which is then transferred to TusD, and thus determines the direction of sulfur flow from IscS to 2-thiouridine formation. Also appears to be involved in sulfur transfer for the biosynthesis of molybdopterin. This is Sulfur carrier protein TusA from Cronobacter sakazakii (strain ATCC BAA-894) (Enterobacter sakazakii).